A 528-amino-acid polypeptide reads, in one-letter code: Protein arginine N-methyltransferase 3 (528 aa).

The disordered stretch occupies residues Met-1–Gly-42. Residue Cys-2 is modified to N-acetylcysteine. Phosphoserine is present on residues Ser-22 and Ser-24. Over residues Asp-23–Ala-37 the composition is skewed to acidic residues. The C2H2-type zinc-finger motif lies at Thr-46–His-69. Ser-169 bears the Phosphoserine mark. The mediates interaction with ALDH1A1 stretch occupies residues Met-184–Gln-528. An SAM-dependent MTase PRMT-type domain is found at Asp-214–Gln-528. Arg-236, Gly-260, Asp-282, Ser-284, Ile-310, and Glu-311 together coordinate S-adenosyl-L-homocysteine. Catalysis depends on residues Glu-326 and Glu-335.

Belongs to the class I-like SAM-binding methyltransferase superfamily. Protein arginine N-methyltransferase family. Monomer and homodimer. Interacts with EPB41L3 (via FERM domain); the interaction is direct and inhibits the protein-arginine N-methyltransferase activity of PRMT3. Interacts with the 40S ribosomal protein RPS2. Interacts with ALDH1A1; the interaction is direct, inhibits ALDH1A1 aldehyde dehydrogenase activity and is independent of the methyltransferase activity of PRMT3. In terms of tissue distribution, ubiquitously expressed.

The protein localises to the cytoplasm. It is found in the cytosol. Its subcellular location is the nucleus. The enzyme catalyses L-arginyl-[protein] + S-adenosyl-L-methionine = N(omega)-methyl-L-arginyl-[protein] + S-adenosyl-L-homocysteine + H(+). It catalyses the reaction L-arginyl-[protein] + 2 S-adenosyl-L-methionine = N(omega),N(omega)-dimethyl-L-arginyl-[protein] + 2 S-adenosyl-L-homocysteine + 2 H(+). Its activity is regulated as follows. Inhibited by N-ethylmaleimide and high concentrations of zinc chloride. In terms of biological role, protein-arginine N-methyltransferase that catalyzes both the monomethylation and asymmetric dimethylation of the guanidino nitrogens of arginine residues in target proteins, and therefore falls into the group of type I methyltransferases. Catalyzes the asymmetric arginine dimethylation at multiple sites in the Arg/Gly-rich region of small ribosomal subunit protein uS5/RPS2. Also appears to methylate other ribosomal proteins. May regulate retinoic acid synthesis and signaling by inhibiting ALDH1A1 retinal dehydrogenase activity. Contributes to methylation of histone H4 'Arg-3', a specific tag for epigenetic transcriptional activation. Promotes osteogenesis. This chain is Protein arginine N-methyltransferase 3, found in Rattus norvegicus (Rat).